A 102-amino-acid polypeptide reads, in one-letter code: Small ribosomal subunit protein uS10 (102 aa).

This sequence belongs to the universal ribosomal protein uS10 family. In terms of assembly, part of the 30S ribosomal subunit.

Its function is as follows. Involved in the binding of tRNA to the ribosomes. The sequence is that of Small ribosomal subunit protein uS10 from Pelobacter propionicus (strain DSM 2379 / NBRC 103807 / OttBd1).